Consider the following 470-residue polypeptide: Dihydrolipoyl dehydrogenase (470 aa).

Residues 39–47, K56, and A119 each bind FAD; that span reads EKGNLGGVC. An intrachain disulfide couples C47 to C52. Residues 183-187, E206, and 271-274 each bind NAD(+); these read GGGYI and TVGR. The FAD site is built by D314 and A322. The Proton acceptor role is filled by H446.

It belongs to the class-I pyridine nucleotide-disulfide oxidoreductase family. As to quaternary structure, homodimer. Identified in a complex with PdhC. FAD serves as cofactor.

It is found in the cytoplasm. It catalyses the reaction N(6)-[(R)-dihydrolipoyl]-L-lysyl-[protein] + NAD(+) = N(6)-[(R)-lipoyl]-L-lysyl-[protein] + NADH + H(+). In terms of biological role, lipoamide dehydrogenase is a component of the alpha-ketoacid dehydrogenase complexes. This Geobacillus stearothermophilus (Bacillus stearothermophilus) protein is Dihydrolipoyl dehydrogenase (pdhD).